The chain runs to 423 residues: Putative competence-damage inducible protein (423 aa).

It belongs to the CinA family.

This Streptococcus equi subsp. zooepidemicus (strain H70) protein is Putative competence-damage inducible protein.